The primary structure comprises 439 residues: 23S rRNA (uracil(1939)-C(5))-methyltransferase RlmD (439 aa).

A TRAM domain is found at 10 to 68; it reads KSTQPQRIEFTVDSLDHHCVGIGRHQGKAIFIEGALPGEQVKARILDDKKQYAHAALQQ. 4 residues coordinate [4Fe-4S] cluster: Cys81, Cys87, Cys90, and Cys169. Residues Gln273, Phe302, Asn307, Glu323, Asp350, and Asp371 each coordinate S-adenosyl-L-methionine. Cys397 acts as the Nucleophile in catalysis.

It belongs to the class I-like SAM-binding methyltransferase superfamily. RNA M5U methyltransferase family. RlmD subfamily.

It carries out the reaction uridine(1939) in 23S rRNA + S-adenosyl-L-methionine = 5-methyluridine(1939) in 23S rRNA + S-adenosyl-L-homocysteine + H(+). In terms of biological role, catalyzes the formation of 5-methyl-uridine at position 1939 (m5U1939) in 23S rRNA. This chain is 23S rRNA (uracil(1939)-C(5))-methyltransferase RlmD, found in Aeromonas salmonicida (strain A449).